The sequence spans 1647 residues: MAP kinase-activating death domain protein (1647 aa).

The uDENN domain occupies 14 to 268; sequence YLVIVGARHP…VPVSGQKRVD (255 aa). Positions 108–122 are enriched in basic and acidic residues; the sequence is EKGEGGAGSRGKEGT. Positions 108–168 are disordered; sequence EKGEGGAGSR…GKRRAKAGSR (61 aa). Low complexity predominate over residues 128-141; that stretch reads SEEGGTESSESGSS. The span at 142–157 shows a compositional bias: polar residues; it reads LQPLSADSTPDVNQSP. The residue at position 156 (Ser156) is a Phosphoserine. A compositionally biased stretch (basic residues) spans 158–167; sequence RGKRRAKAGS. One can recognise a cDENN domain in the interval 289-429; sequence RFTLVDFPLH…ESLELKKHLK (141 aa). In terms of domain architecture, dDENN spans 431 to 565; that stretch reads ALASMSLNTQ…LNPTNYAFQR (135 aa). Disordered stretches follow at residues 604–636 and 678–842; these read ALSVPPERDSDSEPTDDSGSDSMDYDDSSSSYS and NQKE…STEG. The segment covering 615-630 has biased composition (acidic residues); the sequence is SEPTDDSGSDSMDYDD. 2 positions are modified to phosphoserine: Ser689 and Ser692. The segment covering 689 to 699 has biased composition (polar residues); it reads SENSQENPPLR. Residues 700–712 are compositionally biased toward low complexity; the sequence is SSSSTTASSSPST. The segment covering 750–768 has biased composition (basic and acidic residues); the sequence is NVDRRQAEIGEGSVRRRIY. Residues 790–804 show a composition bias toward polar residues; sequence ESYTPRFSQHVSGNR. 3 positions are modified to phosphoserine: Ser813, Ser818, and Ser820. Over residues 827–840 the composition is skewed to low complexity; that stretch reads RASSPNSTVSNTST. 5 positions are modified to phosphoserine: Ser858, Ser862, Ser916, Ser921, and Ser930. 3 disordered regions span residues 913–941, 1051–1110, and 1146–1243; these read QKSSVIKHSPTVKREPPSPQGRSSNSSEN, KEPD…DTRS, and VFDL…DSEI. Residues 932–941 show a composition bias toward polar residues; the sequence is QGRSSNSSEN. A Phosphoserine modification is found at Ser1059. Phosphothreonine is present on residues Thr1061 and Thr1066. Position 1110 is a phosphoserine (Ser1110). 3 stretches are compositionally biased toward polar residues: residues 1158–1173, 1189–1207, and 1234–1243; these read QISADSGVSLTSSSQR, RSSSQDSEVSTVVSNSSGE, and SRGTLSDSEI. Thr1237 bears the Phosphothreonine mark. Phosphoserine is present on residues Ser1239 and Ser1270. The 76-residue stretch at 1340–1415 folds into the Death domain; it reads GMDQGPQEMI…GLVYSQQINE (76 aa).

This sequence belongs to the MADD family. As to quaternary structure, interacts (via death domain) with TNFRSF1A (via death domain). Interacts with PIDD1. Interacts with YWHAZ. Interacts (via death domain) with KIF1B; links the motor KIF1B to Rab3-carrying vesicles in anterograde synaptic vesicle transport. Interacts with KIF1A. Interacts (via uDENN domain) with RAB3A, RAB3B, RAB3C and RAB3D; the GTP-bound form of the Rab proteins is preferred for interaction. Expressed in testis, ovary, brain and heart. Expressed in spleen, thymus, prostate, testis, ovary, small instestine and colon. Expressed in liver. In terms of tissue distribution, not detected in the brain, breast, kidney, lung, ovary, pancreas, testis, uterus, stomach and thyroid. As to expression, expressed in the brain, breast, kidney, lung, ovary, pancreas, testis, uterus, stomach and thyroid.

It is found in the cell membrane. Its subcellular location is the cytoplasm. The protein localises to the cell projection. It localises to the axon. In terms of biological role, guanyl-nucleotide exchange factor that regulates small GTPases of the Rab family. Converts GDP-bound inactive form of RAB27A and RAB27B to the GTP-bound active forms. Converts GDP-bound inactive form of RAB3A, RAB3C and RAB3D to the GTP-bound active forms, GTPases involved in synaptic vesicle exocytosis and vesicle secretion. Plays a role in synaptic vesicle formation and in vesicle trafficking at the neuromuscular junction. Involved in up-regulating a post-docking step of synaptic exocytosis in central synapses. Probably by binding to the motor proteins KIF1B and KIF1A, mediates motor-dependent transport of GTP-RAB3A-positive vesicles to the presynaptic nerve terminals. Plays a role in TNFA-mediated activation of the MAPK pathway, including ERK1/2. May link TNFRSF1A with MAP kinase activation. May be involved in the regulation of TNFA-induced apoptosis. This Homo sapiens (Human) protein is MAP kinase-activating death domain protein.